The primary structure comprises 599 residues: Elongation factor 4 (599 aa).

Residues 2–184 (KNIRNFSIIA…RLVRDIPPPQ (183 aa)) form the tr-type G domain. GTP contacts are provided by residues 14–19 (DHGKST) and 131–134 (NKID).

The protein belongs to the TRAFAC class translation factor GTPase superfamily. Classic translation factor GTPase family. LepA subfamily.

The protein resides in the cell inner membrane. It carries out the reaction GTP + H2O = GDP + phosphate + H(+). Required for accurate and efficient protein synthesis under certain stress conditions. May act as a fidelity factor of the translation reaction, by catalyzing a one-codon backward translocation of tRNAs on improperly translocated ribosomes. Back-translocation proceeds from a post-translocation (POST) complex to a pre-translocation (PRE) complex, thus giving elongation factor G a second chance to translocate the tRNAs correctly. Binds to ribosomes in a GTP-dependent manner. This Salmonella gallinarum (strain 287/91 / NCTC 13346) protein is Elongation factor 4.